Consider the following 807-residue polypeptide: Glycerol-3-phosphate acyltransferase (807 aa).

The HXXXXD motif motif lies at 309-314; sequence CHRSHM.

Belongs to the GPAT/DAPAT family.

It is found in the cell inner membrane. It carries out the reaction sn-glycerol 3-phosphate + an acyl-CoA = a 1-acyl-sn-glycero-3-phosphate + CoA. Its pathway is phospholipid metabolism; CDP-diacylglycerol biosynthesis; CDP-diacylglycerol from sn-glycerol 3-phosphate: step 1/3. The chain is Glycerol-3-phosphate acyltransferase from Aeromonas hydrophila subsp. hydrophila (strain ATCC 7966 / DSM 30187 / BCRC 13018 / CCUG 14551 / JCM 1027 / KCTC 2358 / NCIMB 9240 / NCTC 8049).